The following is a 188-amino-acid chain: dCTP deaminase (188 aa).

Residues 111-116, 135-137, Q156, Y170, and Q180 each bind dCTP; these read KSTYAR and TLE. The active-site Proton donor/acceptor is the E137.

It belongs to the dCTP deaminase family. In terms of assembly, homotrimer.

The catalysed reaction is dCTP + H2O + H(+) = dUTP + NH4(+). The protein operates within pyrimidine metabolism; dUMP biosynthesis; dUMP from dCTP (dUTP route): step 1/2. In terms of biological role, catalyzes the deamination of dCTP to dUTP. This Pseudomonas aeruginosa (strain UCBPP-PA14) protein is dCTP deaminase.